The following is a 138-amino-acid chain: Putative pre-16S rRNA nuclease (138 aa).

Belongs to the YqgF nuclease family.

It is found in the cytoplasm. Could be a nuclease involved in processing of the 5'-end of pre-16S rRNA. The sequence is that of Putative pre-16S rRNA nuclease from Enterobacter sp. (strain 638).